A 2963-amino-acid chain; its full sequence is tRNA nuclease CdiA (2963 aa).

The signal sequence occupies residues 1–29 (MIPIYLRQKLISYALIYLVAIQPIMPVMA). The segment at 35-320 (AQGSTALDKA…AQGNITLNSH (286 aa)) is two-partner system transport domain (TPS). The interval 573 to 1074 (GNVVAQEHAQ…MVLNTASLLN (502 aa)) is FHA-1. The interval 1075 to 1342 (RRDGFSVTEK…KPLTRAQLSD (268 aa)) is receptor binding domain (RBD). The tract at residues 1343 to 1528 (YPLPDSNNGL…LAKAEQAHLQ (186 aa)) is YP domain. The segment at 1529–1751 (GSVISGNKVE…ATLQAERDVN (223 aa)) is periplasmic FHA-1 repeat (pFR). Residues 1759 to 1770 (TRNQHIDSEDKT) are compositionally biased toward basic and acidic residues. Disordered stretches follow at residues 1759–1787 (TRNQ…LTAS) and 1992–2012 (SKSS…SASA). An FHA-2 region spans residues 1762–2314 (QHIDSEDKTT…DSDNYNSIQK (553 aa)). A compositionally biased stretch (polar residues) spans 1771 to 1782 (TGYTRSTLSSGG). A VEDN CT cleavage motif motif is present at residues 2694 to 2697 (VEDN). Positions 2694 to 2963 (VEDNNLSFGK…TGRVRNFHPN (270 aa)) are C-terminal effector domain (CT).

The protein in the N-terminal section; belongs to the CdiA toxin family. This sequence in the C-terminal section; belongs to the bacterial EndoU family. In terms of assembly, forms a 1:1 complex with cognate immunity protein CdiI.

It is found in the secreted. Its subcellular location is the target cell. The protein resides in the target cell cytoplasm. In terms of biological role, toxic component of a toxin-immunity protein module, which functions as a cellular contact-dependent growth inhibition (CDI) system. CDI modules allow bacteria to communicate with and inhibit the growth of closely related neighboring bacteria in a contact-dependent fashion. Targeting of the CT domain (residues 2824-2963) in the absence of immunity protein inhibits cell growth and causes tRNA(UUC-Glu) cleavage in the anticodon loop; expression of cognate immunity protein CdiI-43969 neutralizes growth inhibition and tRNA(UUC-Glu) remains intact, whereas non-cognate immunity proteins do not confer protection from the toxic effects. Functionally, the CdiA protein is thought to be exported from the cell through the central lumen of CdiB, the other half of its two-partner system (TPS). The TPS domain probably remains associated with CdiB while the FHA-1 domain forms an extended filament with the receptor-binding domain (RBD) at its extremity; in the secretion arrested state the C-terminus of the RBD and YP domains form a hairpin-like structure as the FHA-2, PT and CT domains are periplasmic. The YP domain is probably responsible for this arrest at the point where it re-enters the host cell periplasm. Upon binding to a target cell outer membrane receptor a signal is transmitted to activate secretion. The filament elongates slightly, the rest of CdiA is secreted and the FHA-2 domain becomes stably associated with the target cell's outer membrane where it facilitates entry of the toxic CT domain into the target cell periplasm. From there the toxic CT domain is cleaved and gains access to the target cell cytoplasm via an inner membrane protein. The polypeptide is tRNA nuclease CdiA (Yersinia mollaretii (strain ATCC 43969 / DSM 18520 / CIP 103324 / CNY 7263 / WAIP 204)).